A 474-amino-acid chain; its full sequence is Aspartyl/glutamyl-tRNA(Asn/Gln) amidotransferase subunit B (474 aa).

It belongs to the GatB/GatE family. GatB subfamily. Heterotrimer of A, B and C subunits.

It carries out the reaction L-glutamyl-tRNA(Gln) + L-glutamine + ATP + H2O = L-glutaminyl-tRNA(Gln) + L-glutamate + ADP + phosphate + H(+). The catalysed reaction is L-aspartyl-tRNA(Asn) + L-glutamine + ATP + H2O = L-asparaginyl-tRNA(Asn) + L-glutamate + ADP + phosphate + 2 H(+). Functionally, allows the formation of correctly charged Asn-tRNA(Asn) or Gln-tRNA(Gln) through the transamidation of misacylated Asp-tRNA(Asn) or Glu-tRNA(Gln) in organisms which lack either or both of asparaginyl-tRNA or glutaminyl-tRNA synthetases. The reaction takes place in the presence of glutamine and ATP through an activated phospho-Asp-tRNA(Asn) or phospho-Glu-tRNA(Gln). In Lactiplantibacillus plantarum (strain ATCC BAA-793 / NCIMB 8826 / WCFS1) (Lactobacillus plantarum), this protein is Aspartyl/glutamyl-tRNA(Asn/Gln) amidotransferase subunit B.